The sequence spans 274 residues: Large ribosomal subunit protein uL2cz/uL2cy (274 aa).

Disordered stretches follow at residues 1–22 (MAIH…DSQV) and 223–274 (MNPV…RRTK).

It belongs to the universal ribosomal protein uL2 family. As to quaternary structure, part of the 50S ribosomal subunit.

The protein resides in the plastid. It is found in the chloroplast. The protein is Large ribosomal subunit protein uL2cz/uL2cy (rpl2-A) of Phaseolus vulgaris (Kidney bean).